Here is a 277-residue protein sequence, read N- to C-terminus: Probable septum site-determining protein MinC (277 aa).

The interval 107–168 (TEGLLPGRKG…ESGPQVSHYD (62 aa)) is disordered. Residues 122–142 (GKPDGKAAEGRAPDHGTEGRA) are compositionally biased toward basic and acidic residues.

The protein belongs to the MinC family. In terms of assembly, interacts with MinD and FtsZ.

In terms of biological role, cell division inhibitor that blocks the formation of polar Z ring septums. Rapidly oscillates between the poles of the cell to destabilize FtsZ filaments that have formed before they mature into polar Z rings. Prevents FtsZ polymerization. The chain is Probable septum site-determining protein MinC from Mesorhizobium japonicum (strain LMG 29417 / CECT 9101 / MAFF 303099) (Mesorhizobium loti (strain MAFF 303099)).